The chain runs to 249 residues: 6-phosphogluconolactonase 3 (249 aa).

It belongs to the glucosamine/galactosamine-6-phosphate isomerase family. 6-phosphogluconolactonase subfamily.

The protein resides in the cytoplasm. It localises to the nucleus. It carries out the reaction 6-phospho-D-glucono-1,5-lactone + H2O = 6-phospho-D-gluconate + H(+). The protein operates within carbohydrate degradation; pentose phosphate pathway; D-ribulose 5-phosphate from D-glucose 6-phosphate (oxidative stage): step 2/3. In terms of biological role, hydrolysis of 6-phosphogluconolactone to 6-phosphogluconate. This chain is 6-phosphogluconolactonase 3 (SOL3), found in Saccharomyces cerevisiae (strain RM11-1a) (Baker's yeast).